A 753-amino-acid chain; its full sequence is LIM domain and actin-binding protein 1 (753 aa).

Met1 carries the post-translational modification N-acetylmethionine. Ser15 bears the Phosphoserine mark. The span at 46–56 shows a compositional bias: basic and acidic residues; the sequence is EEANMERKKNN. 2 disordered regions span residues 46-66 and 82-186; these read EEAN…HFRR and GAEF…TSGK. Ser132 is subject to Phosphoserine. Residues 143 to 152 show a composition bias toward basic and acidic residues; sequence PRSENSHDFK. Positions 164-166 match the Required for interaction with NPC1L1 motif; it reads CLG. A compositionally biased stretch (basic and acidic residues) spans 167–177; the sequence is DSRHEAEKPET. Residues Ser225, Ser230, Ser242, and Ser263 each carry the phosphoserine modification. 2 disordered regions span residues 276 to 326 and 341 to 379; these read AAVS…VSTT and TCNS…TAKK. Residues 278–291 show a composition bias toward polar residues; sequence VSKQSSPASYTNEL. Residues 292-305 show a composition bias toward basic and acidic residues; sequence KTSESKTHKWEQKE. Polar residues predominate over residues 342-351; it reads CNSQVKSEAQ. 4 positions are modified to phosphoserine: Ser348, Ser360, Ser367, and Ser372. A compositionally biased stretch (polar residues) spans 363–375; that stretch reads ARTSSLPESSPSK. Residues 386–446 enclose the LIM zinc-binding domain; sequence ESCVECQKTV…KPHFNQLFKS (61 aa). Lys437 carries the post-translational modification N6-succinyllysine. Ser467, Ser485, and Ser488 each carry phosphoserine. Disordered regions lie at residues 467 to 493, 505 to 669, and 682 to 703; these read SDNE…GVED, SMEA…FELE, and EDDN…GWSG. Residues 491 to 511 form a required for interaction with MYO5B region; that stretch reads VEDAPIAKVGVLAASMEAKAS. Composition is skewed to basic and acidic residues over residues 512–525 and 554–565; these read SQRE…ETKK and WPPEDDVCKTEA. The span at 598 to 609 shows a compositional bias: low complexity; sequence SSIKSPKASSPS. Phosphoserine is present on residues Ser599, Ser602, Ser607, and Ser615. Basic and acidic residues predominate over residues 630–666; the sequence is MERKQTENARPSGEKENVGKSRWQGEEVPRSKDRSSF. Residues Ser692, Ser720, and Ser735 each carry the phosphoserine modification.

In terms of assembly, interacts with NPC1L1; bridges NPC1L1 with MYO5B. Interacts with MYO5B; bridges MYO5B with NPC1L1. Interacts with PXN; this complex stabilizes actin dynamics. Binds to G-actin and F-actin. Interacts with LUZP1 (via C-terminus); both proteins restrict ciliation and may work together to regulate this process. Binds RAB40B (GTP-bound); interaction influences LIMA1 subcellular localization in lamellipodia during cell migration. Phosphorylation of the C-terminal region by MAPK1/MAPK3 reduces its association with F-actin and contributes to actin filament reorganization and enhances cell motility. In terms of processing, ubiquitinated by the ECS(RAB40B) complex leading to its degradation. As to expression, highly expressed in the small intestine, including the duodenum, jejunum, and ileum. Low expression in the liver and very low expressed in the heart, spleen, lung, brain, and pancreas. Isoform Alpha is highly expressed in embryos from day 7-11 and in adult spleen and lung. Isoform Beta expression is highest in adult kidney, testis, lung and liver, intermediate in heart, brain, spleen, skeletal muscle and low in embryos.

The protein resides in the cytoplasm. Its subcellular location is the cell junction. The protein localises to the focal adhesion. It localises to the cytoskeleton. It is found in the stress fiber. The protein resides in the cell membrane. Its subcellular location is the cell projection. The protein localises to the ruffle. It localises to the lamellipodium. Its function is as follows. Actin-binding protein involved in actin cytoskeleton regulation and dynamics. Increases the number and size of actin stress fibers and inhibits membrane ruffling. Inhibits actin filament depolymerization. Bundles actin filaments, delays filament nucleation and reduces formation of branched filaments. Acts as a negative regulator of primary cilium formation. Plays a role in cholesterol homeostasis. Influences plasma cholesterol levels through regulation of intestinal cholesterol absorption. May act as a scaffold protein by regulating NPC1L1 transportation, an essential protein for cholesterol absorption, to the plasma membrane by recruiting MYO5B to NPC1L1, and thus facilitates cholesterol uptake. This is LIM domain and actin-binding protein 1 (Lima1) from Mus musculus (Mouse).